We begin with the raw amino-acid sequence, 108 residues long: Large ribosomal subunit protein uL24 (108 aa).

This sequence belongs to the universal ribosomal protein uL24 family. As to quaternary structure, part of the 50S ribosomal subunit.

One of two assembly initiator proteins, it binds directly to the 5'-end of the 23S rRNA, where it nucleates assembly of the 50S subunit. Functionally, one of the proteins that surrounds the polypeptide exit tunnel on the outside of the subunit. The polypeptide is Large ribosomal subunit protein uL24 (Geobacter sulfurreducens (strain ATCC 51573 / DSM 12127 / PCA)).